The primary structure comprises 59 residues: MSESEQRHAHQCVSCGINIAGMSAATFKCPDCGQEISRCSKCRKQSNLYECPDCGFMGP.

4 consecutive short sequence motifs (c(P)XCG motif) follow at residues Cys12–Gly16, Cys29–Gly33, Cys39–Arg43, and Cys51–Gly55. Positions 29 and 32 each coordinate Zn(2+). Residues Cys51 and Cys54 each coordinate Zn(2+).

As to quaternary structure, monomer in solution.

In terms of biological role, zinc-binding protein that binds only one zinc ion. Is required for swarming and biofilm formation. The protein is Zinc finger protein HVO_2753 of Haloferax volcanii (strain ATCC 29605 / DSM 3757 / JCM 8879 / NBRC 14742 / NCIMB 2012 / VKM B-1768 / DS2) (Halobacterium volcanii).